The primary structure comprises 330 residues: MKIKNILLTLCTSLLLTNVAAHAKEVKIGMAIDDLRLERWQKDRDIFVKKAESLGAKVFVQSANGNEETQMSQIENMINRGVDVLVIIPYNGQVLSNVVKEAKQEGIKVLAYDRMINDADIDFYISFDNEKVGELQAKALVDIVPQGNYFLMGGSPVDNNAKLFRAGQMKVLKPYVDSGKIKVVGDQWVDGWLPENALKIMENALTANNNKIDAVVASNDATAGGAIQALSAQGLSGKVAISGQDADLAGIKRIAAGTQTMTVYKPITLLANTAAEIAVELGNGQEPKADTTLNNGLKDVPSRLLTPIDVNKNNIKDTVIKDGFHKESEL.

An N-terminal signal peptide occupies residues 1-23; that stretch reads MKIKNILLTLCTSLLLTNVAAHA.

The protein belongs to the bacterial solute-binding protein 2 family.

The protein resides in the periplasm. Involved in the high-affinity D-xylose membrane transport system. Binds with high affinity to xylose. This chain is D-xylose-binding periplasmic protein (xylF), found in Escherichia coli (strain K12).